We begin with the raw amino-acid sequence, 740 residues long: Polyribonucleotide nucleotidyltransferase (740 aa).

Residues D496 and D502 each contribute to the Mg(2+) site. The region spanning 563–622 (PAIIRTSIHPDKIRDIIGPGGKIIKKLVEETGADIDIEDDGRVFIAAVDREKGKRALEII) is the KH domain. The region spanning 632–706 (GKLYNGKVTR…QQGRLKLSKK (75 aa)) is the S1 motif domain. The interval 707–740 (EAMRDMGLAPAESTSEQPEKRERRPFSRPKATKE) is disordered. Residues 723-740 (QPEKRERRPFSRPKATKE) are compositionally biased toward basic and acidic residues.

It belongs to the polyribonucleotide nucleotidyltransferase family. Mg(2+) is required as a cofactor.

The protein localises to the cytoplasm. The enzyme catalyses RNA(n+1) + phosphate = RNA(n) + a ribonucleoside 5'-diphosphate. Its function is as follows. Involved in mRNA degradation. Catalyzes the phosphorolysis of single-stranded polyribonucleotides processively in the 3'- to 5'-direction. The protein is Polyribonucleotide nucleotidyltransferase of Desulforamulus reducens (strain ATCC BAA-1160 / DSM 100696 / MI-1) (Desulfotomaculum reducens).